We begin with the raw amino-acid sequence, 102 residues long: Large ribosomal subunit protein uL24 (102 aa).

This sequence belongs to the universal ribosomal protein uL24 family. Part of the 50S ribosomal subunit.

One of two assembly initiator proteins, it binds directly to the 5'-end of the 23S rRNA, where it nucleates assembly of the 50S subunit. In terms of biological role, one of the proteins that surrounds the polypeptide exit tunnel on the outside of the subunit. The chain is Large ribosomal subunit protein uL24 from Cupriavidus pinatubonensis (strain JMP 134 / LMG 1197) (Cupriavidus necator (strain JMP 134)).